Consider the following 477-residue polypeptide: Inner membrane transporter YgjI (477 aa).

The Periplasmic segment spans residues methionine 1–threonine 8. The helical transmembrane segment at isoleucine 9 to isoleucine 29 threads the bilayer. Topologically, residues asparagine 30 to proline 41 are cytoplasmic. Residues methionine 42 to valine 62 form a helical membrane-spanning segment. Over serine 63 to arginine 83 the chain is Periplasmic. The chain crosses the membrane as a helical span at residues tryptophan 84 to leucine 104. Topologically, residues proline 105–tyrosine 120 are cytoplasmic. Residues isoleucine 121–valine 141 form a helical membrane-spanning segment. Residues serine 142 to threonine 158 lie on the Periplasmic side of the membrane. Residues leucine 159 to valine 179 form a helical membrane-spanning segment. Residues glutamine 180–tryptophan 196 lie on the Cytoplasmic side of the membrane. A helical transmembrane segment spans residues alanine 197–valine 217. At tyrosine 218–valine 232 the chain is on the periplasmic side. A helical transmembrane segment spans residues isoleucine 233–valine 253. Topologically, residues phenylalanine 254–threonine 263 are cytoplasmic. The chain crosses the membrane as a helical span at residues glycine 264–methionine 284. At asparagine 285–arginine 286 the chain is on the periplasmic side. Residues phenylalanine 287–proline 307 form a helical membrane-spanning segment. The Cytoplasmic portion of the chain corresponds to valine 308 to arginine 335. A helical membrane pass occupies residues alanine 336–asparagine 356. The Periplasmic portion of the chain corresponds to threonine 357–threonine 364. The chain crosses the membrane as a helical span at residues isoleucine 365 to leucine 385. Residues asparagine 386 to threonine 405 lie on the Cytoplasmic side of the membrane. A helical transmembrane segment spans residues glycine 406 to phenylalanine 426. Topologically, residues proline 427–asparagine 431 are periplasmic. The helical transmembrane segment at isoleucine 432–tryptophan 452 threads the bilayer. Residues lysine 453–aspartate 477 lie on the Cytoplasmic side of the membrane.

Belongs to the amino acid-polyamine-organocation (APC) superfamily.

The protein localises to the cell inner membrane. The protein is Inner membrane transporter YgjI (ygjI) of Escherichia coli (strain K12).